We begin with the raw amino-acid sequence, 161 residues long: Allophycocyanin alpha chain (161 aa).

Residue Asn71 is modified to N4-methylasparagine. Cys81 lines the (2R,3E)-phycocyanobilin pocket.

This sequence belongs to the phycobiliprotein family. Heterodimer of an alpha and a beta chain. Post-translationally, contains one covalently linked phycocyanobilin chromophore.

It localises to the cellular thylakoid membrane. In terms of biological role, light-harvesting photosynthetic bile pigment-protein from the phycobiliprotein complex. Allophycocyanin has a maximum absorption at approximately 650 nanometers. In Synechocystis sp. (strain ATCC 27184 / PCC 6803 / Kazusa), this protein is Allophycocyanin alpha chain (apcA).